A 744-amino-acid polypeptide reads, in one-letter code: Dual specificity protein kinase shkD (744 aa).

Residues 1-276 (MKRFFSNLFK…SGPPEILPEE (276 aa)) form a disordered region. Low complexity-rich tracts occupy residues 25–70 (PTTS…NSNQ), 79–107 (SPST…SFTP), and 127–200 (TSTT…QTAS). A compositionally biased stretch (polar residues) spans 201–210 (VNHTSSDQSL). Over residues 211–236 (NAQNVTQTNNNNNNNNNNNNNNNANN) the composition is skewed to low complexity. The Protein kinase domain maps to 277 to 534 (IDRTDFLGQG…EILFRLNEIL (258 aa)). Residues 283 to 291 (LGQGSFGSV) and K304 contribute to the ATP site. Catalysis depends on D400, which acts as the Proton acceptor. Residues 641–734 (WFHGDIVREQ…LVPCPKFTQE (94 aa)) enclose the SH2 domain.

This sequence belongs to the protein kinase superfamily. Ser/Thr protein kinase family. SH2 domain-containing protein kinase subfamily.

It is found in the membrane. It carries out the reaction L-seryl-[protein] + ATP = O-phospho-L-seryl-[protein] + ADP + H(+). The enzyme catalyses L-threonyl-[protein] + ATP = O-phospho-L-threonyl-[protein] + ADP + H(+). Functionally, required for proper chemotaxis and phagocytosis; proper spatiotemporal control of F-actin levels in chemotaxing cells. Negative regulator of the PI3K (phosphatidylinositol 3 kinase) pathway. Predominantly phosphorylates serines and threonines and tyrosines at a lower level. This chain is Dual specificity protein kinase shkD (shkD), found in Dictyostelium discoideum (Social amoeba).